Here is a 479-residue protein sequence, read N- to C-terminus: MSILVKNNIHWVGQRDWEVRDFHGTEYKTLRGSSYNSYLIREEKNVLIDTVDHKFSREFVQNLRSEIDLADIDYIIINHAEEDHAGALTELMAQIPDTPIYCTANAIDSINGHHHHPEWNFKVVKTGDTLDIGNGKQLIFVETPMLHWPDSMMTYMTGDAVLFSNDAFGQHYCDERLFNDEVDQTELFEQCQRYYANILTPFSRLVTPKITEILGFNLPVDMIATSHGVVWRDNPTQIVELYLKWTADYQEDRITIFYDTMSNNTRMMADAIAQGINEVDPNVAVKIFNVARSDKNEILTNVFRSKGVLVGTSTMNNVMMPKIAGLVEEMTGLRFRNKRASAFGSHGWSGGAVDRLSTRLQDAGFEMSLSLKAKWRPDLDALELCRQHGRDIARQWALAPLPETTQKTAPAEEITTCAAADLGPKMQCSVCQWIYDPALGEPLQDVAPGTPWSEVPDNFLCPECSLGKDVFDVLATEAK.

The zinc metallo-hydrolase stretch occupies residues 30–210; the sequence is LRGSSYNSYL…PFSRLVTPKI (181 aa). The Fe cation site is built by H79, E81, D83, H147, D166, and H227. The 140-residue stretch at 254–393 folds into the Flavodoxin-like domain; that stretch reads ITIFYDTMSN…LCRQHGRDIA (140 aa). Residues 260–264 and 342–369 contribute to the FMN site; these read TMSNN and AFGSHGWSGGAVDRLSTRLQDAGFEMSL. The region spanning 423-474 is the Rubredoxin-like domain; sequence GPKMQCSVCQWIYDPALGEPLQDVAPGTPWSEVPDNFLCPECSLGKDVFDVL. Positions 428, 431, 461, and 464 each coordinate Fe cation.

The protein in the N-terminal section; belongs to the zinc metallo-hydrolase group 3 family. In terms of assembly, homotetramer. Fe cation is required as a cofactor. Requires FMN as cofactor.

It localises to the cytoplasm. The protein operates within nitrogen metabolism; nitric oxide reduction. Its function is as follows. Anaerobic nitric oxide reductase; uses NADH to detoxify nitric oxide (NO), protecting several 4Fe-4S NO-sensitive enzymes. Has at least 2 reductase partners, only one of which (NorW, flavorubredoxin reductase) has been identified. NO probably binds to the di-iron center; electrons enter from the NorW at rubredoxin and are transferred sequentially to the FMN center and the di-iron center. Also able to function as an aerobic oxygen reductase. The chain is Anaerobic nitric oxide reductase flavorubredoxin from Salmonella paratyphi A (strain ATCC 9150 / SARB42).